A 493-amino-acid polypeptide reads, in one-letter code: MNNAEVLNVALDEDSSNSNDDLNYSEYQPKNHPIKSHYDMDIENVHFLLEPTMSKKKCETEYLPGTTSFGMSVFNLSNAIVGSGILGLSYAMANTGIALFMILLVFVTVFSLYSIHLLLKTANEGGSLLYEQLGLKAFGIPGKLAASGSVTLQNIGAMSSYLYIVKYELPLVIKALMDIKESNGEWYLNGDYLVIMVSLAIILPLSLLRNLGYLGYTSGFSPLCMVFFLIVVIYKKFEIPCPLEAMNMTSNSSSHDHMAHNETDDEMCKPKYFVFNSQTVYAVPILTFSFVCHPAVLPIYQELKGRSRRRMMNVSNVSFFAMFIMYLLAALFGYLTFYSKVEPELLHTYSKVFGAGVIFVVVRLAVLMAVTLTVPIVIFPIRSSLNELFCSGKDFAWIRHILITFLILAFTNVLVIFVPTIRDIFGFIGASAAAMLVFILPSAFYIRLVKKESMKSVQKIGALLFLIGGIIVMIGSMTLIILDWIHNSTSGGN.

Over 1–72 (MNNAEVLNVA…LPGTTSFGMS (72 aa)) the chain is Cytoplasmic. The tract at residues 1 to 92 (MNNAEVLNVA…SGILGLSYAM (92 aa)) is regulates protein turnover upon amino acid deprivation. Residues 73-92 (VFNLSNAIVGSGILGLSYAM) traverse the membrane as a helical segment. Asn78 is a binding site for Na(+). At 93–98 (ANTGIA) the chain is on the extracellular side. A helical membrane pass occupies residues 99–119 (LFMILLVFVTVFSLYSIHLLL). Topologically, residues 120–154 (KTANEGGSLLYEQLGLKAFGIPGKLAASGSVTLQN) are cytoplasmic. Residues 155-173 (IGAMSSYLYIVKYELPLVI) traverse the membrane as a helical segment. Topologically, residues 174–184 (KALMDIKESNG) are extracellular. A helical membrane pass occupies residues 185 to 205 (EWYLNGDYLVIMVSLAIILPL). The Cytoplasmic portion of the chain corresponds to 206-213 (SLLRNLGY). A helical membrane pass occupies residues 214-234 (LGYTSGFSPLCMVFFLIVVIY). Residues 235-279 (KKFEIPCPLEAMNMTSNSSSHDHMAHNETDDEMCKPKYFVFNSQT) lie on the Extracellular side of the membrane. A disulfide bond links Cys241 and Cys268. Residues Asn247, Asn251, and Asn261 are each glycosylated (N-linked (GlcNAc...) asparagine). A helical transmembrane segment spans residues 280-300 (VYAVPILTFSFVCHPAVLPIY). The Cytoplasmic portion of the chain corresponds to 301–316 (QELKGRSRRRMMNVSN). A helical transmembrane segment spans residues 317-337 (VSFFAMFIMYLLAALFGYLTF). Residues 338–358 (YSKVEPELLHTYSKVFGAGVI) lie on the Extracellular side of the membrane. The helical transmembrane segment at 359-379 (FVVVRLAVLMAVTLTVPIVIF) threads the bilayer. A Na(+)-binding site is contributed by Thr373. The Cytoplasmic portion of the chain corresponds to 380–400 (PIRSSLNELFCSGKDFAWIRH). Residues 401 to 421 (ILITFLILAFTNVLVIFVPTI) form a helical membrane-spanning segment. At 422–423 (RD) the chain is on the extracellular side. A helical transmembrane segment spans residues 424–444 (IFGFIGASAAAMLVFILPSAF). Topologically, residues 445–459 (YIRLVKKESMKSVQK) are cytoplasmic. Residues 460-482 (IGALLFLIGGIIVMIGSMTLIIL) form a helical membrane-spanning segment. Over 483 to 493 (DWIHNSTSGGN) the chain is Extracellular.

It belongs to the amino acid/polyamine transporter 2 family.

It localises to the cell membrane. The enzyme catalyses L-alanine(in) + Na(+)(in) = L-alanine(out) + Na(+)(out). It carries out the reaction glycine(in) + Na(+)(in) = glycine(out) + Na(+)(out). It catalyses the reaction L-serine(in) + Na(+)(in) = L-serine(out) + Na(+)(out). The catalysed reaction is L-proline(in) + Na(+)(in) = L-proline(out) + Na(+)(out). The enzyme catalyses L-methionine(in) + Na(+)(in) = L-methionine(out) + Na(+)(out). It carries out the reaction L-histidine(in) + Na(+)(in) = L-histidine(out) + Na(+)(out). It catalyses the reaction L-asparagine(in) + Na(+)(in) = L-asparagine(out) + Na(+)(out). The catalysed reaction is L-glutamine(in) + Na(+)(in) = L-glutamine(out) + Na(+)(out). The enzyme catalyses L-threonine(in) + Na(+)(in) = L-threonine(out) + Na(+)(out). It carries out the reaction L-leucine(in) + Na(+)(in) = L-leucine(out) + Na(+)(out). It catalyses the reaction L-phenylalanine(in) + Na(+)(in) = L-phenylalanine(out) + Na(+)(out). Its activity is regulated as follows. Inhibited by N-methyl-D-glucamine. Inhibited by choline. Allosteric regulation of sodium ions binding by pH. In terms of biological role, symporter that cotransports neutral amino acids and sodium ions from the extracellular to the intracellular side of the cell membrane. The transport is pH-sensitive, Li(+)-intolerant, electrogenic, driven by the Na(+) electrochemical gradient and cotransports of neutral amino acids and sodium ions with a stoichiometry of 1:1. This Xenopus tropicalis (Western clawed frog) protein is Sodium-coupled neutral amino acid symporter 2.